The chain runs to 478 residues: Cytochrome c-552 (478 aa).

Residues 1-26 form the signal peptide; the sequence is MARKTLRARRFFSLIFPFFFITSVYA. His-94 contributes to the heme c binding site. Heme is bound by residues Cys-122, Cys-125, and Lys-126. Cys-160, Cys-163, His-164, Cys-209, Cys-212, and His-213 together coordinate heme c. Residues Glu-215, Tyr-216, Lys-261, and Gln-263 each coordinate Ca(2+). Tyr-216 contacts substrate. His-264 lines the substrate pocket. Heme c is bound by residues His-275, Cys-282, Cys-285, His-286, His-301, Cys-314, Cys-317, His-318, and His-393.

It belongs to the cytochrome c-552 family. Ca(2+) serves as cofactor. Heme c is required as a cofactor.

It localises to the periplasm. It carries out the reaction 6 Fe(III)-[cytochrome c] + NH4(+) + 2 H2O = 6 Fe(II)-[cytochrome c] + nitrite + 8 H(+). It participates in nitrogen metabolism; nitrate reduction (assimilation). In terms of biological role, catalyzes the reduction of nitrite to ammonia, consuming six electrons in the process. The protein is Cytochrome c-552 of Salmonella typhi.